The primary structure comprises 245 residues: 1-(5-phosphoribosyl)-5-[(5-phosphoribosylamino)methylideneamino] imidazole-4-carboxamide isomerase (245 aa).

The active-site Proton acceptor is aspartate 7. Catalysis depends on aspartate 129, which acts as the Proton donor.

It belongs to the HisA/HisF family.

Its subcellular location is the cytoplasm. It catalyses the reaction 1-(5-phospho-beta-D-ribosyl)-5-[(5-phospho-beta-D-ribosylamino)methylideneamino]imidazole-4-carboxamide = 5-[(5-phospho-1-deoxy-D-ribulos-1-ylimino)methylamino]-1-(5-phospho-beta-D-ribosyl)imidazole-4-carboxamide. Its pathway is amino-acid biosynthesis; L-histidine biosynthesis; L-histidine from 5-phospho-alpha-D-ribose 1-diphosphate: step 4/9. The chain is 1-(5-phosphoribosyl)-5-[(5-phosphoribosylamino)methylideneamino] imidazole-4-carboxamide isomerase from Shewanella frigidimarina (strain NCIMB 400).